The following is a 504-amino-acid chain: MEEFQGYLELDKSRQHDFLYPLIFQEYIYALAHDHGLNRSILLENVGYDNKSSSLIVKRLITRMYQQNHLIISVNDSNQNPFLGHNKNLYSQMISEGFAVIVEIPFSLRSVSSLEGKEIVQSHNLRSIHSIFPFLEDKFLHLNYVSDILIPHPIHLEILVQTLRYWVKDASSLHLLRFFFYEYYNWNSLITPKKSISIFSKRNQRLFLFLYNSHVCEYESIFLFFRNQSSYLRSTSSGALLERIYFYGKIKHLVEVFVNDFQAILWLFKDPFMHYVRYQGKSILASKGTPLLMNKWKYYLVNFWQCHFYVWSQPGRIYINQLSNHSFDFLGYLSSVGLNPSVVRSQMLENSFIIDNAIKKFDIIVPIIPLIGSLAKAKFCNVLGHPISKPARADSSDSDIIDRFVRICRNLSHYHSGSSKKKSLYRIKYILRLSCARTLARKHKSTVRAFLKRLGSGLLEEFLTEEEQVLSLIFPKASSTSRRLYRGRIWYFDIISINDLANHE.

Belongs to the intron maturase 2 family. MatK subfamily.

Its subcellular location is the plastid. It localises to the chloroplast. Usually encoded in the trnK tRNA gene intron. Probably assists in splicing its own and other chloroplast group II introns. This chain is Maturase K, found in Hamamelis japonica (Japanese witch hazel).